The following is a 339-amino-acid chain: MNEEYIEKFKEAKEKILRAQNLTELEEVKRVYLGKQGFLTQILRSIGKMPQEERAKWGRLANEWKEELESLYENKEKELKYLTLQKKLEEEKIDITLPGRRKILGRIHPINQVIEEIVMVFKEMGFQVVYGPELETDYYNFTALNIPMDHPVRESHDSFYIDKEHLLRTQTSPVQIRVMENKKPPLRVVAPGKCYRRDIPDATHSPMFHQIEGLVVDTDVTFAELKGVLTIFAHRLFGKDRKVYFIPSYFPFTEPSAEMYVECGVCKGAGCKACGYSGVLEILGCGMVHPQVFRIVGIDPEKYTGFAFGMGPDRIAMQIYGIDDIRLFYENDVRFLKQF.

Position 254 (Glu254) interacts with Mg(2+).

It belongs to the class-II aminoacyl-tRNA synthetase family. Phe-tRNA synthetase alpha subunit type 1 subfamily. As to quaternary structure, tetramer of two alpha and two beta subunits. The cofactor is Mg(2+).

The protein localises to the cytoplasm. It carries out the reaction tRNA(Phe) + L-phenylalanine + ATP = L-phenylalanyl-tRNA(Phe) + AMP + diphosphate + H(+). In Dictyoglomus turgidum (strain DSM 6724 / Z-1310), this protein is Phenylalanine--tRNA ligase alpha subunit.